The sequence spans 180 residues: GTP cyclohydrolase 1 (180 aa).

Residues Cys71, His74, and Cys142 each coordinate Zn(2+).

This sequence belongs to the GTP cyclohydrolase I family. As to quaternary structure, toroid-shaped homodecamer, composed of two pentamers of five dimers.

It catalyses the reaction GTP + H2O = 7,8-dihydroneopterin 3'-triphosphate + formate + H(+). It functions in the pathway cofactor biosynthesis; 7,8-dihydroneopterin triphosphate biosynthesis; 7,8-dihydroneopterin triphosphate from GTP: step 1/1. The polypeptide is GTP cyclohydrolase 1 (folE) (Helicobacter pylori (strain ATCC 700392 / 26695) (Campylobacter pylori)).